The following is a 499-amino-acid chain: Pentatricopeptide repeat-containing protein At5g61800 (499 aa).

PPR repeat units follow at residues 78–113, 114–150, 151–181, 182–212, 213–247, 248–282, 283–313, 314–348, 349–379, and 385–419; these read STFC…SVPP, DFHT…GLLS, DLFT…NPQR, DVVT…MPLR, DLVS…GLKP, DNVA…RLFI, DSFL…CSDK, TLFT…GIKP, DGVT…MRSL, and EMKH…GGNR. The type E motif stretch occupies residues 424–499; sequence AWSGLLGGCR…KNVGFSKVLS (76 aa).

It belongs to the PPR family. PCMP-E subfamily.

This is Pentatricopeptide repeat-containing protein At5g61800 (PCMP-E8) from Arabidopsis thaliana (Mouse-ear cress).